The following is a 549-amino-acid chain: Glucose-6-phosphate isomerase (549 aa).

The active-site Proton donor is Glu355. Residues His386 and Lys514 contribute to the active site.

It belongs to the GPI family.

The protein resides in the cytoplasm. It catalyses the reaction alpha-D-glucose 6-phosphate = beta-D-fructose 6-phosphate. It participates in carbohydrate biosynthesis; gluconeogenesis. Its pathway is carbohydrate degradation; glycolysis; D-glyceraldehyde 3-phosphate and glycerone phosphate from D-glucose: step 2/4. Its function is as follows. Catalyzes the reversible isomerization of glucose-6-phosphate to fructose-6-phosphate. This chain is Glucose-6-phosphate isomerase, found in Salmonella arizonae (strain ATCC BAA-731 / CDC346-86 / RSK2980).